Consider the following 107-residue polypeptide: Small ribosomal subunit protein uS10c (107 aa).

Belongs to the universal ribosomal protein uS10 family. In terms of assembly, part of the 30S ribosomal subunit.

It is found in the plastid. Its subcellular location is the chloroplast. Functionally, involved in the binding of tRNA to the ribosomes. This chain is Small ribosomal subunit protein uS10c, found in Phaeodactylum tricornutum (strain CCAP 1055/1).